The chain runs to 198 residues: RNA 2',3'-cyclic phosphodiesterase (198 aa).

His-39 functions as the Proton donor in the catalytic mechanism. Short sequence motifs (HXTX) lie at residues His-39–Leu-42 and His-130–Leu-133. The active-site Proton acceptor is His-130.

The protein belongs to the 2H phosphoesterase superfamily. ThpR family.

The catalysed reaction is a 3'-end 2',3'-cyclophospho-ribonucleotide-RNA + H2O = a 3'-end 2'-phospho-ribonucleotide-RNA + H(+). Its function is as follows. Hydrolyzes RNA 2',3'-cyclic phosphodiester to an RNA 2'-phosphomonoester. The chain is RNA 2',3'-cyclic phosphodiesterase from Thermus thermophilus (strain ATCC 27634 / DSM 579 / HB8).